The primary structure comprises 239 residues: Large ribosomal subunit protein uL2 (239 aa).

Disordered stretches follow at residues 1–20 (MGKS…FRSP) and 203–239 (PFGG…GRRK). Residues 222–239 (PPGRKVGHIAARRTGRRK) show a composition bias toward basic residues.

This sequence belongs to the universal ribosomal protein uL2 family. As to quaternary structure, part of the 50S ribosomal subunit. Forms a bridge to the 30S subunit in the 70S ribosome.

Functionally, one of the primary rRNA binding proteins. Required for association of the 30S and 50S subunits to form the 70S ribosome, for tRNA binding and peptide bond formation. It has been suggested to have peptidyltransferase activity; this is somewhat controversial. Makes several contacts with the 16S rRNA in the 70S ribosome. The protein is Large ribosomal subunit protein uL2 of Pyrococcus horikoshii (strain ATCC 700860 / DSM 12428 / JCM 9974 / NBRC 100139 / OT-3).